Here is a 226-residue protein sequence, read N- to C-terminus: Elongation factor 1-delta 2 (226 aa).

A disordered region spans residues 82-131 (TACSVSPTADQKAPAADEEDDDDVDLFGEETEEEKKAAEERAAAVKASGK). Positions 97–113 (ADEEDDDDVDLFGEETE) are enriched in acidic residues. The segment covering 114–124 (EEKKAAEERAA) has biased composition (basic and acidic residues).

Belongs to the EF-1-beta/EF-1-delta family. EF-1 is composed of 4 subunits: alpha, beta (1B-alpha=beta'), delta (1B-beta), and gamma (1B-gamma).

Functionally, EF-1-beta and EF-1-beta' stimulate the exchange of GDP bound to EF-1-alpha to GTP. This Oryza sativa subsp. japonica (Rice) protein is Elongation factor 1-delta 2.